Consider the following 516-residue polypeptide: UDP-N-acetylmuramyl-tripeptide synthetase (516 aa).

A UDP-N-acetyl-alpha-D-muramoyl-L-alanyl-D-glutamate-binding site is contributed by serine 36. 113-119 (GTKGKTT) contributes to the ATP binding site. UDP-N-acetyl-alpha-D-muramoyl-L-alanyl-D-glutamate contacts are provided by residues 159–160 (TT), serine 186, and arginine 194. Lysine 228 carries the post-translational modification N6-carboxylysine.

This sequence belongs to the MurCDEF family. MurE subfamily. In terms of processing, carboxylation is probably crucial for Mg(2+) binding and, consequently, for the gamma-phosphate positioning of ATP.

Its subcellular location is the cytoplasm. Its pathway is cell wall biogenesis; peptidoglycan biosynthesis. Functionally, catalyzes the addition of an amino acid to the nucleotide precursor UDP-N-acetylmuramoyl-L-alanyl-D-glutamate (UMAG) in the biosynthesis of bacterial cell-wall peptidoglycan. This chain is UDP-N-acetylmuramyl-tripeptide synthetase, found in Limosilactobacillus reuteri (strain DSM 20016) (Lactobacillus reuteri).